Here is a 398-residue protein sequence, read N- to C-terminus: Argininosuccinate synthase (398 aa).

9–17 (AYSGGLDTS) contributes to the ATP binding site. L-citrulline is bound by residues Tyr-87 and Ser-92. Gly-117 is an ATP binding site. Thr-119, Asn-123, and Asp-124 together coordinate L-aspartate. An L-citrulline-binding site is contributed by Asn-123. L-citrulline contacts are provided by Arg-127, Ser-176, Ser-185, Glu-261, and Tyr-273.

It belongs to the argininosuccinate synthase family. Type 1 subfamily. As to quaternary structure, homotetramer.

The protein localises to the cytoplasm. The enzyme catalyses L-citrulline + L-aspartate + ATP = 2-(N(omega)-L-arginino)succinate + AMP + diphosphate + H(+). It participates in amino-acid biosynthesis; L-arginine biosynthesis; L-arginine from L-ornithine and carbamoyl phosphate: step 2/3. In Clostridium tetani (strain Massachusetts / E88), this protein is Argininosuccinate synthase.